The chain runs to 563 residues: Arginine--tRNA ligase (563 aa).

A 'HIGH' region motif is present at residues 121-131 (PNIAKPFSIGH).

Belongs to the class-I aminoacyl-tRNA synthetase family. In terms of assembly, monomer.

The protein resides in the cytoplasm. It carries out the reaction tRNA(Arg) + L-arginine + ATP = L-arginyl-tRNA(Arg) + AMP + diphosphate. The chain is Arginine--tRNA ligase from Streptococcus pneumoniae (strain Taiwan19F-14).